The chain runs to 148 residues: Large ribosomal subunit protein bL9 (148 aa).

It belongs to the bacterial ribosomal protein bL9 family.

Functionally, binds to the 23S rRNA. The sequence is that of Large ribosomal subunit protein bL9 from Parabacteroides distasonis (strain ATCC 8503 / DSM 20701 / CIP 104284 / JCM 5825 / NCTC 11152).